Here is a 274-residue protein sequence, read N- to C-terminus: Triosephosphate isomerase (274 aa).

Position 13–15 (13–15 (NWK)) interacts with substrate. The active-site Electrophile is His98. Glu170 serves as the catalytic Proton acceptor. Residues Gly176 and Ser216 each coordinate substrate.

This sequence belongs to the triosephosphate isomerase family. Homodimer.

Its subcellular location is the cytoplasm. It catalyses the reaction D-glyceraldehyde 3-phosphate = dihydroxyacetone phosphate. The protein operates within carbohydrate biosynthesis; gluconeogenesis. Its pathway is carbohydrate degradation; glycolysis; D-glyceraldehyde 3-phosphate from glycerone phosphate: step 1/1. In terms of biological role, involved in the gluconeogenesis. Catalyzes stereospecifically the conversion of dihydroxyacetone phosphate (DHAP) to D-glyceraldehyde-3-phosphate (G3P). The sequence is that of Triosephosphate isomerase from Onion yellows phytoplasma (strain OY-M).